Consider the following 264-residue polypeptide: MKTYLDLLSHVLNKGIDRTDRTGVGTRSVFGYQMRFDLQAGFPLLTTKKLHLRSIIYELLWFLRGDTNIAWLKEHGVSIWDEWADEKGNLGPIYGYQWRSWPAPDGRHIDQISNLLMMIKKTPDSRRLIVSAWNPASIKEMALPPCHCFFQFYVADGKLSCQLYQRSADIFLGIPFNIASYALLTMMIAQVSGLKVGDFIHTLGDAHLYSNHFEQAQHQLSRIPNALPFMRINPAVTDLFSFKFEDFELLNYDAQPHIKAPIAV.

DUMP is bound at residue arginine 21. Histidine 51 is a binding site for (6R)-5,10-methylene-5,6,7,8-tetrahydrofolate. 126 to 127 contacts dUMP; it reads RR. The Nucleophile role is filled by cysteine 146. Residues 166–169, asparagine 177, and 207–209 each bind dUMP; these read RSAD and HLY. Aspartate 169 lines the (6R)-5,10-methylene-5,6,7,8-tetrahydrofolate pocket. Residue alanine 263 coordinates (6R)-5,10-methylene-5,6,7,8-tetrahydrofolate.

The protein belongs to the thymidylate synthase family. Bacterial-type ThyA subfamily. In terms of assembly, homodimer.

The protein localises to the cytoplasm. It catalyses the reaction dUMP + (6R)-5,10-methylene-5,6,7,8-tetrahydrofolate = 7,8-dihydrofolate + dTMP. It participates in pyrimidine metabolism; dTTP biosynthesis. Its function is as follows. Catalyzes the reductive methylation of 2'-deoxyuridine-5'-monophosphate (dUMP) to 2'-deoxythymidine-5'-monophosphate (dTMP) while utilizing 5,10-methylenetetrahydrofolate (mTHF) as the methyl donor and reductant in the reaction, yielding dihydrofolate (DHF) as a by-product. This enzymatic reaction provides an intracellular de novo source of dTMP, an essential precursor for DNA biosynthesis. In Bartonella henselae (strain ATCC 49882 / DSM 28221 / CCUG 30454 / Houston 1) (Rochalimaea henselae), this protein is Thymidylate synthase.